The chain runs to 484 residues: Aldehyde dehydrogenase family 3 member A2 (484 aa).

At 1–463 (MERQVLRLRQ…FLLKQFNKGR (463 aa)) the chain is on the cytoplasmic side. 185 to 190 (GNTAVG) is a binding site for NAD(+). Catalysis depends on residues Glu-207 and Cys-241. The residue at position 293 (Ser-293) is a Phosphoserine. A helical membrane pass occupies residues 464–484 (LGMLLFVCLVAVAAVIVKDQL). The Prevents secretion from ER motif lies at 481–484 (KDQL).

Belongs to the aldehyde dehydrogenase family. As to quaternary structure, homodimer.

Its subcellular location is the membrane. The protein localises to the microsome membrane. The protein resides in the endoplasmic reticulum membrane. The enzyme catalyses an aldehyde + NAD(+) + H2O = a carboxylate + NADH + 2 H(+). It catalyses the reaction a fatty aldehyde + NAD(+) + H2O = a fatty acid + NADH + 2 H(+). It carries out the reaction hexadecanoate + NADH + 2 H(+) = hexadecanal + NAD(+) + H2O. The catalysed reaction is octanal + NAD(+) + H2O = octanoate + NADH + 2 H(+). The enzyme catalyses (2E)-hexadecenal + NAD(+) + H2O = (E)-hexadec-2-enoate + NADH + 2 H(+). It catalyses the reaction 22-oxodocosanoate + NAD(+) + H2O = docosanedioate + NADH + 2 H(+). It carries out the reaction 2,6,10,14-tetramethylpentadecanal + NAD(+) + H2O = 2,6,10,14-tetramethylpentadecanoate + NADH + 2 H(+). The catalysed reaction is octadecanal + NAD(+) + H2O = octadecanoate + NADH + 2 H(+). The enzyme catalyses dodecanoate + NADH + 2 H(+) = dodecanal + NAD(+) + H2O. It catalyses the reaction decanal + NAD(+) + H2O = decanoate + NADH + 2 H(+). It carries out the reaction tetradecanal + NAD(+) + H2O = tetradecanoate + NADH + 2 H(+). The catalysed reaction is heptanal + NAD(+) + H2O = heptanoate + NADH + 2 H(+). The enzyme catalyses (2E,6E)-farnesal + NAD(+) + H2O = (2E,6E)-farnesoate + NADH + 2 H(+). In terms of biological role, catalyzes the oxidation of medium and long-chain aliphatic aldehydes to fatty acids. Active on a variety of saturated and unsaturated aliphatic aldehydes between 6 and 24 carbons in length. Responsible for conversion of the sphingosine 1-phosphate (S1P) degradation product hexadecenal to hexadecenoic acid. The polypeptide is Aldehyde dehydrogenase family 3 member A2 (Aldh3a2) (Mus musculus (Mouse)).